A 245-amino-acid polypeptide reads, in one-letter code: 1-(5-phosphoribosyl)-5-[(5-phosphoribosylamino)methylideneamino] imidazole-4-carboxamide isomerase (245 aa).

Asp8 acts as the Proton acceptor in catalysis. The Proton donor role is filled by Asp130.

Belongs to the HisA/HisF family.

It is found in the cytoplasm. The catalysed reaction is 1-(5-phospho-beta-D-ribosyl)-5-[(5-phospho-beta-D-ribosylamino)methylideneamino]imidazole-4-carboxamide = 5-[(5-phospho-1-deoxy-D-ribulos-1-ylimino)methylamino]-1-(5-phospho-beta-D-ribosyl)imidazole-4-carboxamide. It participates in amino-acid biosynthesis; L-histidine biosynthesis; L-histidine from 5-phospho-alpha-D-ribose 1-diphosphate: step 4/9. This is 1-(5-phosphoribosyl)-5-[(5-phosphoribosylamino)methylideneamino] imidazole-4-carboxamide isomerase from Pseudomonas putida (strain GB-1).